The sequence spans 891 residues: Probable serine/threonine-protein kinase mkcC (891 aa).

Disordered regions lie at residues 24-70 (IELN…TATI), 85-121 (ANNN…APSS), 264-435 (DDPQ…AREK), 495-526 (NSLG…PEVS), and 565-588 (TTAS…DDYD). The span at 29–41 (QEEQQQPEQQEQP) shows a compositional bias: low complexity. The span at 45–58 (EELKDNNEKIKTSE) shows a compositional bias: basic and acidic residues. Low complexity-rich tracts occupy residues 61 to 70 (TTTTTTTATI), 86 to 105 (NNNT…LNNN), 297 to 314 (STSN…TTGK), 322 to 360 (SNSS…SGTS), and 379 to 397 (TTGN…TTSS). Positions 422–432 (RKRKEQKRSRA) are enriched in basic residues. The span at 495 to 522 (NSLGSSINKNNSNNTTTTTTTTNTNNKS) shows a compositional bias: low complexity. The Protein kinase domain occupies 616–864 (YKNLKQIGSG…AEQLLKHPWI (249 aa)). ATP is bound by residues 622-630 (IGSGGFGSV) and Lys645. Catalysis depends on Asp735, which acts as the Proton acceptor.

The protein belongs to the protein kinase superfamily. STE Ser/Thr protein kinase family. STE20 subfamily. Mg(2+) is required as a cofactor.

The catalysed reaction is L-seryl-[protein] + ATP = O-phospho-L-seryl-[protein] + ADP + H(+). The enzyme catalyses L-threonyl-[protein] + ATP = O-phospho-L-threonyl-[protein] + ADP + H(+). In Dictyostelium discoideum (Social amoeba), this protein is Probable serine/threonine-protein kinase mkcC.